The primary structure comprises 667 residues: Leucine aminopeptidase 2 (667 aa).

A peptide contacts are provided by residues 188-190 (QCQ) and 318-323 (PYGGME). Position 347 (histidine 347) interacts with Zn(2+). Catalysis depends on glutamate 348, which acts as the Proton acceptor. 2 residues coordinate Zn(2+): histidine 351 and glutamate 370. Tyrosine 436 functions as the Proton donor in the catalytic mechanism.

This sequence belongs to the peptidase M1 family. Zn(2+) serves as cofactor.

The protein localises to the cytoplasm. It localises to the nucleus. The enzyme catalyses an epoxide + H2O = an ethanediol. Functionally, aminopeptidase that preferentially cleaves di- and tripeptides. Also has low epoxide hydrolase activity (in vitro). Can hydrolyze the epoxide leukotriene LTA(4) but it forms preferentially 5,6-dihydroxy-7,9,11,14-eicosatetraenoic acid rather than the cytokine leukotriene B(4) as the product compared to the homologous mammalian enzyme (in vitro). This Neurospora crassa (strain ATCC 24698 / 74-OR23-1A / CBS 708.71 / DSM 1257 / FGSC 987) protein is Leucine aminopeptidase 2 (ara-1).